The sequence spans 188 residues: Myc target protein 1 (188 aa).

A helical membrane pass occupies residues 24 to 44 (FTVSVAIGLAIGGFLWALFVF). Positions 47 to 65 (RRRRASAPISQWSPTRRPR) match the Bipartite nuclear localization signal motif. Phosphoserine occurs at positions 87, 90, 93, and 101.

The protein belongs to the MYCT1 family. In terms of tissue distribution, highly expressed in lung, heart, and skeletal muscle. Expressed in brain, eye, liver, kidney, smooth muscle, pancreas, thyroid, thymus, submaxillary gland, spleen, testis, ovary, prostate, epididymis, and uterus. Deregulated expression promotes apoptosis in response to growth factor deprivation. Overexpression in synergy with CCNB1 may promote genomic instability.

Its subcellular location is the nucleus membrane. In terms of biological role, may regulate certain MYC target genes, MYC seems to be a direct upstream transcriptional activator. Does not seem to significantly affect growth cell capacity. Overexpression seems to mediate many of the known phenotypic features associated with MYC, including promotion of apoptosis, alteration of morphology, enhancement of anchorage-independent growth, tumorigenic conversion, promotion of genomic instability and inhibition of hematopoietic differentiation. The chain is Myc target protein 1 (Myct1) from Mus musculus (Mouse).